Consider the following 118-residue polypeptide: Small ribosomal subunit protein mS41 (118 aa).

A mitochondrion-targeting transit peptide spans 1–24 (MLRVVAKAQYPAAVRCFSTSHAAF).

Belongs to the mitochondrion-specific ribosomal protein mS41 family.

The protein resides in the mitochondrion. In terms of biological role, involved in telomere length regulation. This is Small ribosomal subunit protein mS41 (FYV4) from Yarrowia lipolytica (strain CLIB 122 / E 150) (Yeast).